The following is a 239-amino-acid chain: Tumor protein p53-inducible nuclear protein 1 (239 aa).

Residues 25–37 (EKEDDEWILVDFI) carry the LIR motif.

As to quaternary structure, interacts with p53/TP53 and HIPK2. Interacts with PRKCG, GABARAP, GABARAPL1, GABARAPL2, MAP1LC3A, MAP1LC3B and MAP1LC3C. As to expression, ubiquitously expressed with highest levels in the thymus.

It localises to the cytoplasm. The protein localises to the cytosol. Its subcellular location is the nucleus. It is found in the PML body. The protein resides in the cytoplasmic vesicle. It localises to the autophagosome. In terms of biological role, antiproliferative and proapoptotic protein involved in cell stress response which acts as a dual regulator of transcription and autophagy. Acts as a positive regulator of autophagy. In response to cellular stress or activation of autophagy, relocates to autophagosomes where it interacts with autophagosome-associated proteins GABARAP, GABARAPL1/L2, MAP1LC3A/B/C and regulates autophagy. Acts as an antioxidant and plays a major role in p53/TP53-driven oxidative stress response. Possesses both a p53/TP53-independent intracellular reactive oxygen species (ROS) regulatory function and a p53/TP53-dependent transcription regulatory function. Positively regulates p53/TP53 and p73/TP73 and stimulates their capacity to induce apoptosis and regulate cell cycle. In response to double-strand DNA breaks, promotes p53/TP53 phosphorylation on 'Ser-46' and subsequent apoptosis. Acts as a tumor suppressor by inducing cell death by an autophagy and caspase-dependent mechanism. Can reduce cell migration by regulating the expression of SPARC. This chain is Tumor protein p53-inducible nuclear protein 1 (Trp53inp1), found in Mus musculus (Mouse).